The following is a 363-amino-acid chain: MKRAPLITGLLLISTSCAYASSGGCGADSTSGATNYSSVVDDVTVNQTDNVTGREFTSATLSSTNWQYACSCSAGKAVKLVYMVSPVLTTTGHQTGYYKLNDSLDIKTTLQANDIPGLTTDQVVSVNTRFTQIKNNTVYSAATQTGVCQGDTSRYGPVNIGANTTFTLYVTKPFLGSMTIPKTDIAVIKGAWVDGMGSPSTGDFHDLVKLSIQGNLTAPQSCKINQGDVIKVNFGFINGQKFTTRNAMPDGFTPVDFDITYDCGDTSKIKNSLQMRIDGTTGVVDQYNLVARRRSSDNVPDVGIRIENLGGGVANIPFQNGILPVDPSGHGTVNMRAWPVNLVGGELETGKFQGTATITVIVR.

An N-terminal signal peptide occupies residues methionine 1–alanine 20.

Belongs to the fimbrial protein family.

It localises to the fimbrium. Part of the yraHIJK fimbrial operon. Could contribute to adhesion to various surfaces in specific environmental niches. Increases adhesion to eukaryotic T24 bladder epithelial cells in the absence of fim operon. This is an uncharacterized protein from Escherichia coli (strain K12).